Reading from the N-terminus, the 527-residue chain is GMP synthase [glutamine-hydrolyzing] (527 aa).

In terms of domain architecture, Glutamine amidotransferase type-1 spans 19 to 212; that stretch reads KIIVLDYGSQ…AFSICGAKGD (194 aa). The active-site Nucleophile is the Cys96. Active-site residues include His186 and Glu188. Positions 213–402 constitute a GMPS ATP-PPase domain; it reads WSMANFVDMQ…LGMPDEVVWR (190 aa). ATP is bound at residue 240-246; the sequence is SGGVDSS.

In terms of assembly, homodimer.

It carries out the reaction XMP + L-glutamine + ATP + H2O = GMP + L-glutamate + AMP + diphosphate + 2 H(+). Its pathway is purine metabolism; GMP biosynthesis; GMP from XMP (L-Gln route): step 1/1. Functionally, catalyzes the synthesis of GMP from XMP. The polypeptide is GMP synthase [glutamine-hydrolyzing] (Streptococcus thermophilus (strain CNRZ 1066)).